Reading from the N-terminus, the 168-residue chain is D-aminoacyl-tRNA deacylase 2 (168 aa).

The Gly-transPro motif, allows the protein to recognize chirality of D-amino acids signature appears at 160–161 (GP).

The protein belongs to the DTD family. As to quaternary structure, homodimer.

It localises to the cytoplasm. It catalyses the reaction a D-aminoacyl-tRNA + H2O = a tRNA + a D-alpha-amino acid + H(+). It carries out the reaction glycyl-tRNA(Ala) + H2O = tRNA(Ala) + glycine + H(+). The catalysed reaction is D-tyrosyl-tRNA(Tyr) + H2O = D-tyrosine + tRNA(Tyr). The enzyme catalyses L-alanyl-tRNA(Thr) + H2O = tRNA(Thr) + L-alanine + H(+). In terms of biological role, deacylates mischarged D-aminoacyl-tRNAs. Also deacylates mischarged glycyl-tRNA(Ala), protecting cells against glycine mischarging by AlaRS. Probably acts by rejecting L-amino acids from its binding site rather than specific recognition of D-amino acids. Catalyzes the hydrolysis of D-tyrosyl-tRNA(Tyr), has no activity on correctly charged L-tyrosyl-tRNA(Tyr). By recycling D-aminoacyl-tRNA to D-amino acids and free tRNA molecules, this enzyme counteracts the toxicity associated with the formation of D-aminoacyl-tRNA entities in vivo and helps enforce protein L-homochirality. In contrast to DTD1, deacylates L-Ala mischarged on tRNA(Thr)(G4.U69) by alanine-tRNA ligase AARS. Can deacylate L-Ala due to a relaxed specificity for substrate chirality caused by the trans conformation of the Gly-Pro motif in the active site. Also hydrolyzes correctly charged, achiral, glycyl-tRNA(Gly) in vitro, although in vivo EEF1A1/EF-Tu may protect cognate achiral glycyl-tRNA(Gly) from DTD2-mediated deacetylation. The polypeptide is D-aminoacyl-tRNA deacylase 2 (DTD2) (Homo sapiens (Human)).